A 138-amino-acid polypeptide reads, in one-letter code: Nucleoside diphosphate kinase (138 aa).

ATP contacts are provided by lysine 9, phenylalanine 57, arginine 85, threonine 91, arginine 102, and asparagine 112. The Pros-phosphohistidine intermediate role is filled by histidine 115.

It belongs to the NDK family. Homotetramer. Requires Mg(2+) as cofactor.

It localises to the cytoplasm. It catalyses the reaction a 2'-deoxyribonucleoside 5'-diphosphate + ATP = a 2'-deoxyribonucleoside 5'-triphosphate + ADP. The catalysed reaction is a ribonucleoside 5'-diphosphate + ATP = a ribonucleoside 5'-triphosphate + ADP. Functionally, major role in the synthesis of nucleoside triphosphates other than ATP. The ATP gamma phosphate is transferred to the NDP beta phosphate via a ping-pong mechanism, using a phosphorylated active-site intermediate. In Trichlorobacter lovleyi (strain ATCC BAA-1151 / DSM 17278 / SZ) (Geobacter lovleyi), this protein is Nucleoside diphosphate kinase.